We begin with the raw amino-acid sequence, 504 residues long: Apolipoprotein N-acyltransferase (504 aa).

A run of 6 helical transmembrane segments spans residues 6–26 (LALT…YALV), 47–67 (ALYG…WVFV), 83–103 (LTAL…WLGV), 105–125 (AGGG…WVVT), 153–173 (IAPV…AGLL), and 186–206 (FALL…KVQW). The CN hydrolase domain occupies 219–457 (LQGNVPQDQK…REALTGMMQP (239 aa)). The active-site Proton acceptor is glutamate 258. Residue lysine 317 is part of the active site. Cysteine 369 acts as the Nucleophile in catalysis. Residues 465-485 (ALWGDWPAIGLCAGIVGICFA) form a helical membrane-spanning segment.

The protein belongs to the CN hydrolase family. Apolipoprotein N-acyltransferase subfamily.

It is found in the cell inner membrane. The enzyme catalyses N-terminal S-1,2-diacyl-sn-glyceryl-L-cysteinyl-[lipoprotein] + a glycerophospholipid = N-acyl-S-1,2-diacyl-sn-glyceryl-L-cysteinyl-[lipoprotein] + a 2-acyl-sn-glycero-3-phospholipid + H(+). Its pathway is protein modification; lipoprotein biosynthesis (N-acyl transfer). Functionally, catalyzes the phospholipid dependent N-acylation of the N-terminal cysteine of apolipoprotein, the last step in lipoprotein maturation. The polypeptide is Apolipoprotein N-acyltransferase (Methylococcus capsulatus (strain ATCC 33009 / NCIMB 11132 / Bath)).